The primary structure comprises 420 residues: Protein phosphatase methylesterase 1 (420 aa).

2 stretches are compositionally biased toward low complexity: residues 18-28 (PEAPLLSESSS) and 42-51 (SSVSSTGTVI). The tract at residues 18-51 (PEAPLLSESSSMNHPAESSHDEDSSSVSSTGTVI) is disordered. Active-site residues include Ser197, Asp223, and His354.

It belongs to the AB hydrolase superfamily.

It catalyses the reaction [phosphatase 2A protein]-C-terminal L-leucine methyl ester + H2O = [phosphatase 2A protein]-C-terminal L-leucine + methanol + H(+). Demethylates proteins that have been reversibly carboxymethylated. Demethylates the phosphatase PP2A catalytic subunit. The protein is Protein phosphatase methylesterase 1 (ppe1) of Aspergillus fumigatus (strain ATCC MYA-4609 / CBS 101355 / FGSC A1100 / Af293) (Neosartorya fumigata).